A 103-amino-acid chain; its full sequence is Nucleoid-associated protein Anae109_3761 (103 aa).

It belongs to the YbaB/EbfC family. As to quaternary structure, homodimer.

It is found in the cytoplasm. The protein localises to the nucleoid. In terms of biological role, binds to DNA and alters its conformation. May be involved in regulation of gene expression, nucleoid organization and DNA protection. In Anaeromyxobacter sp. (strain Fw109-5), this protein is Nucleoid-associated protein Anae109_3761.